We begin with the raw amino-acid sequence, 363 residues long: Early boundary activity protein 1 (363 aa).

Positions 155-168 are enriched in basic and acidic residues; that stretch reads MDQEPEHKQSHEQD. The tract at residues 155 to 242 is disordered; it reads MDQEPEHKQS…NAKRRCPGFE (88 aa). Positions 198-209 are enriched in acidic residues; that stretch reads EDLGLDDDDEDY. Positions 255 to 354 constitute a BEN domain; it reads GPNGTEVSRI…TKCADENKML (100 aa).

The heterotrimeric Elba complex consists of Elba1, Elba2 and Elba3.

The protein localises to the nucleus. The heterotrimeric Elba complex is required for chromatin domain boundary function during early embryogenesis. It binds to a 8-bp sequence 5'-CCAATAAG-3' in the Fab-7 insulator or boundary element in the bithorax complex and contributes to its insulator or boundary activity. Elba1 may act as a transcriptional repressor and binds the palindromic sequence 5'-CCAATTGG-3' to mediate transcriptional repression. This is Early boundary activity protein 1 from Drosophila melanogaster (Fruit fly).